The chain runs to 802 residues: Protein enabled homolog (802 aa).

Residues 1 to 111 enclose the WH1 domain; it reads MSEQSICQAR…SAMMHALEVL (111 aa). Residues 143 to 155 are compositionally biased toward polar residues; it reads NSQLPAQVQNGPS. Residues 143–166 are disordered; the sequence is NSQLPAQVQNGPSQEELEIQRRQL. Ser-144 is modified (phosphoserine). A coiled-coil region spans residues 154 to 258; it reads PSQEELEIQR…ERERRMSNAA (105 aa). Repeat copies occupy residues 175-179, 180-184, 185-189, 190-194, 195-199, 200-204, and 205-209. The tract at residues 175–209 is 7 X 5 AA tandem repeats of [LM]-E-[QR]-[EQ]-[QR]; the sequence is LERERMERERLERERLERERLERERLEQEQLERQR. Over residues 245-254 the composition is skewed to basic and acidic residues; the sequence is QVEWERERRM. Disordered regions lie at residues 245 to 287 and 341 to 622; these read QVEW…PSYA and ATVP…RPLT. The residue at position 255 (Ser-255) is a Phosphoserine; by PKA. Low complexity predominate over residues 255-278; the sequence is SNAAPSSDSSLSSAPLPEYSSCQP. Positions 348–361 are enriched in polar residues; that stretch reads NKNSRPSSPVNTPS. Ser-383 is modified (phosphoserine). Residues 386–410 show a composition bias toward low complexity; that stretch reads IMISSPPGKATGPRPVLPVCVSSPV. The segment covering 431–464 has biased composition (pro residues); sequence VSPPPTSGPAAPPPPPPPPPPPPPPPLPPPPLPP. Residues 485 to 505 show a composition bias toward low complexity; that stretch reads STPSSKPSVLPSPSAGAPASA. Polar residues predominate over residues 525–535; it reads AASQPAESPTP. Pro residues predominate over residues 542-553; the sequence is PPAPPPPPPLPS. Residue Tyr-557 is modified to Phosphotyrosine. The span at 561–605 shows a compositional bias: pro residues; the sequence is LPPPPGPPPPPPLPSTGPPPPPPPPPPLPNQAPPPPPPPPAPPLP. The tract at residues 623-643 is EVH2 block A; that stretch reads GLAAAIAGAKLRKVSRVEDGS. Residues 623 to 799 are EVH2; the sequence is GLAAAIAGAK…DAIRQELSKS (177 aa). The KLKR signature appears at 632–635; sequence KLRK. 2 disordered regions span residues 639–675 and 691–764; these read VEDGSFPGGGNTGSVSLASSKADAGRGNGPLPLGGSG and AEKG…TEGL. Residues 664 to 675 are compositionally biased toward gly residues; sequence RGNGPLPLGGSG. An EVH2 block B region spans residues 674–691; that stretch reads SGLMEEMSALLARRRRIA. The span at 731-760 shows a compositional bias: polar residues; that stretch reads RTNTMNGSKSPVISRPKSTPSSQPSANGVQ. A phosphoserine mark is found at Ser-738 and Ser-740. The EVH2 block C stretch occupies residues 765-799; that stretch reads DYDRLKQDILDEMRKELAKLKEELIDAIRQELSKS. The stretch at 767 to 797 forms a coiled coil; that stretch reads DRLKQDILDEMRKELAKLKEELIDAIRQELS.

The protein belongs to the Ena/VASP family. Homotetramer. Interacts with APBB1IP, APBB1, PFN1 and ROBO4. Isoforms, containing the polyproline-rich regions with PPLP motifs, bind the WW domain of APBB1IP. Isoforms, containing the PPSY motif, bind, in vitro, to the WW2 and WW3 domains of NEDD4 and to the WW1 domain of YAP1. Binds the SH3 domain of BAIAP2-alpha but only after the autoinhibitory region of BAIAP2-alpha has been blocked by interaction with CDC42. Interacts, via the EVH1/WH1 domain, with the Pro-rich domains from VCL, ZYX and Listeria monocytogenes actA and with TES (via LIM domain). The TES LIM domain and the Pro-rich domains from VCL or ZYX compete for the same binding site. Interaction with ZYX is important for targeting ENAH to focal adhesions and enhances production of actin-rich structures at the apical surface of cells. Binds GPHN. Heterotrimer with TES and ACTL7A. Interacts with FAT1 (via EVH1 domains). Interacts, through the Pro-rich region, with the C-terminal SH3 domain of DNMPB. Interacts with PRPF40A. Post-translationally, NTN1-induced PKA phosphorylation on Ser-255 directly parallels the formation of filopodial protrusions. In terms of tissue distribution, expressed in heart and testis, lower levels in lung, skeletal muscle, kidney, pancreas and brain. Isoform 5 is expressed exclusively in the brain. Isoform 2 is expressed predominantly in brain, testis, ovary and fat. In the brain, isoforms 2 and 5 are expressed at highest levels in the hippocampus, cortex and midbrain, and at lowest levels in the striatum and cerebellum. Isoform 6 is expressed in brain and spleen.

The protein resides in the cytoplasm. It is found in the cytoskeleton. Its subcellular location is the cell projection. It localises to the lamellipodium. The protein localises to the filopodium. The protein resides in the synapse. It is found in the cell junction. Its subcellular location is the focal adhesion. In terms of biological role, ena/VASP proteins are actin-associated proteins involved in a range of processes dependent on cytoskeleton remodeling and cell polarity such as axon guidance and lamellipodial and filopodial dynamics in migrating cells. ENAH induces the formation of F-actin rich outgrowths in fibroblasts. Acts synergistically with BAIAP2-alpha and downstream of NTN1 to promote filipodia formation. The chain is Protein enabled homolog (Enah) from Mus musculus (Mouse).